The sequence spans 236 residues: Phosphoribosylaminoimidazole-succinocarboxamide synthase (236 aa).

This sequence belongs to the SAICAR synthetase family.

It carries out the reaction 5-amino-1-(5-phospho-D-ribosyl)imidazole-4-carboxylate + L-aspartate + ATP = (2S)-2-[5-amino-1-(5-phospho-beta-D-ribosyl)imidazole-4-carboxamido]succinate + ADP + phosphate + 2 H(+). The protein operates within purine metabolism; IMP biosynthesis via de novo pathway; 5-amino-1-(5-phospho-D-ribosyl)imidazole-4-carboxamide from 5-amino-1-(5-phospho-D-ribosyl)imidazole-4-carboxylate: step 1/2. This Pelodictyon phaeoclathratiforme (strain DSM 5477 / BU-1) protein is Phosphoribosylaminoimidazole-succinocarboxamide synthase.